Consider the following 555-residue polypeptide: Glypican-6 (555 aa).

Positions 1–23 (MPSWIGAVILPLLGLLLSLPAGA) are cleaved as a signal peptide. Residues 348 to 357 (PALRSARSAP) are compositionally biased toward low complexity. Residues 348-376 (PALRSARSAPENFNTRFRPYNPEERPTTA) form a disordered region. Serine 529 is lipidated: GPI-anchor amidated serine. A propeptide spans 530-555 (SAAQRGHSLLSWSLTCIVLALQRLCR) (removed in mature form).

This sequence belongs to the glypican family.

Its subcellular location is the cell membrane. The protein resides in the secreted. It is found in the extracellular space. In terms of biological role, cell surface proteoglycan that bears heparan sulfate. Putative cell surface coreceptor for growth factors, extracellular matrix proteins, proteases and anti-proteases. Enhances migration and invasion of cancer cells through WNT5A signaling. This Pongo abelii (Sumatran orangutan) protein is Glypican-6 (GPC6).